The primary structure comprises 149 residues: SsrA-binding protein (149 aa).

It belongs to the SmpB family.

Its subcellular location is the cytoplasm. In terms of biological role, required for rescue of stalled ribosomes mediated by trans-translation. Binds to transfer-messenger RNA (tmRNA), required for stable association of tmRNA with ribosomes. tmRNA and SmpB together mimic tRNA shape, replacing the anticodon stem-loop with SmpB. tmRNA is encoded by the ssrA gene; the 2 termini fold to resemble tRNA(Ala) and it encodes a 'tag peptide', a short internal open reading frame. During trans-translation Ala-aminoacylated tmRNA acts like a tRNA, entering the A-site of stalled ribosomes, displacing the stalled mRNA. The ribosome then switches to translate the ORF on the tmRNA; the nascent peptide is terminated with the 'tag peptide' encoded by the tmRNA and targeted for degradation. The ribosome is freed to recommence translation, which seems to be the essential function of trans-translation. This Wolbachia pipientis subsp. Culex pipiens (strain wPip) protein is SsrA-binding protein.